The sequence spans 263 residues: Lens fiber major intrinsic protein (263 aa).

Residues 1-9 (MWELRSASF) are Cytoplasmic-facing. The helical transmembrane segment at 10-29 (WRAICAEFFASLFYVFFGLG) threads the bilayer. Residues 30-41 (ASLRWAPGPLHV) are Extracellular-facing. The helical transmembrane segment at 42–59 (LQVALAFGLALATLVQAV) threads the bilayer. Residues 60–61 (GH) lie on the Cytoplasmic side of the membrane. Residues 62–77 (ISGAHVNPAVTFAFLV) constitute an intramembrane region (discontinuously helical). The NPA 1 signature appears at 68 to 70 (NPA). At 78–82 (GSQMS) the chain is on the cytoplasmic side. Residues 83–106 (LLRAICYMVAQLLGAVAGAAVLYS) traverse the membrane as a helical segment. At 107 to 127 (VTPPAVRGNLALNTLHPGVSV) the chain is on the extracellular side. Residues 128 to 148 (GQATIVEIFLTLQFVLCIFAT) traverse the membrane as a helical segment. The Cytoplasmic portion of the chain corresponds to 149–156 (YDERRNGR). Residues 157 to 175 (LGSVALAVGFSLTLGHLFG) form a helical membrane-spanning segment. The Extracellular segment spans residues 176–178 (MYY). Residues 179–193 (TGAGMNPARSFAPAI) constitute an intramembrane region (discontinuously helical). Residues 184 to 186 (NPA) carry the NPA 2 motif. Over 194–200 (LTRNFTN) the chain is Extracellular. Residues 201-222 (HWVYWVGPVIGAGLGSLLYDFL) traverse the membrane as a helical segment. Residues 223–263 (LFPRLKSVSERLSILKGSRPSESNGQPEVTGEPVELKTQAL) are Cytoplasmic-facing. An interaction with CALM region spans residues 227–237 (LKSVSERLSIL). Residue Ser-235 is modified to Phosphoserine. Positions 239 to 263 (GSRPSESNGQPEVTGEPVELKTQAL) are disordered. Ser-243 bears the Phosphoserine; by PKA mark. At Ser-245 the chain carries Phosphoserine. Asn-246 is modified (deamidated asparagine).

It belongs to the MIP/aquaporin (TC 1.A.8) family. Homotetramer; each monomer provides an independent water pore. Two homotetramers on opposing membranes can dimerize, forming a cell-cell junction. Interacts with CALM; the calcium-calmodulin/CALM complex interacts with the cytoplasmic domains of two aquaporins, leading to channel closure. Interacts with BFSP1 (via C-terminus); prevents calcium-dependent inhibition of the water channel activity. In terms of processing, fatty acylated at Met-1 and Lys-238. The acyl modifications, in decreasing order of ion abundance, are: oleoyl (C18:1) &gt; palmitoyl (C16:0) &gt; stearoyl (C18:0) &gt; eicosenoyl (C20:1) &gt; dihomo-gamma-linolenoyl (C20:3) &gt; palmitoleoyl (C16:1) &gt; eicosadienoyl (C20:2). Subject to partial proteolytic cleavage in the eye lens core. Partial proteolysis promotes interactions between tetramers from adjoining membranes. In terms of tissue distribution, major component of lens fiber junctions.

Its subcellular location is the cell membrane. It localises to the cell junction. It carries out the reaction H2O(in) = H2O(out). Its activity is regulated as follows. The water channel activity is inhibited by calcium through calmodulin/CALM. Its function is as follows. Aquaporins form homotetrameric transmembrane channels, with each monomer independently mediating water transport across the plasma membrane along its osmotic gradient. Specifically expressed in lens fiber cells, this aquaporin is crucial for maintaining lens water homeostasis and transparency. Beyond water permeability, it also acts as a cell-to-cell adhesion molecule, forming thin junctions between lens fiber cells that are essential for maintaining the ordered structure and transparency of the lens. This chain is Lens fiber major intrinsic protein, found in Bos taurus (Bovine).